A 487-amino-acid chain; its full sequence is UDP-N-acetylmuramate--L-alanine ligase (487 aa).

Residue 130–136 coordinates ATP; the sequence is GTHGKTT.

The protein belongs to the MurCDEF family.

The protein localises to the cytoplasm. The catalysed reaction is UDP-N-acetyl-alpha-D-muramate + L-alanine + ATP = UDP-N-acetyl-alpha-D-muramoyl-L-alanine + ADP + phosphate + H(+). Its pathway is cell wall biogenesis; peptidoglycan biosynthesis. Its function is as follows. Cell wall formation. In Photobacterium profundum (strain SS9), this protein is UDP-N-acetylmuramate--L-alanine ligase.